Reading from the N-terminus, the 189-residue chain is Large ribosomal subunit protein bL17 (189 aa).

Belongs to the bacterial ribosomal protein bL17 family. In terms of assembly, part of the 50S ribosomal subunit. Contacts protein L32.

In Rhodococcus jostii (strain RHA1), this protein is Large ribosomal subunit protein bL17.